Reading from the N-terminus, the 465-residue chain is Cysteine--tRNA ligase (465 aa).

Cys-27 contributes to the Zn(2+) binding site. The 'HIGH' region signature appears at Pro-29 to His-39. Residues Cys-204, His-229, and Glu-233 each coordinate Zn(2+). The 'KMSKS' region motif lies at Lys-261–Ser-265. Residue Lys-264 participates in ATP binding.

It belongs to the class-I aminoacyl-tRNA synthetase family. Zn(2+) is required as a cofactor.

It localises to the cytoplasm. The catalysed reaction is tRNA(Cys) + L-cysteine + ATP = L-cysteinyl-tRNA(Cys) + AMP + diphosphate. This chain is Cysteine--tRNA ligase, found in Metallosphaera sedula (strain ATCC 51363 / DSM 5348 / JCM 9185 / NBRC 15509 / TH2).